A 330-amino-acid chain; its full sequence is 4-hydroxythreonine-4-phosphate dehydrogenase (330 aa).

Substrate-binding residues include His-135 and Thr-136. The a divalent metal cation site is built by His-165, His-210, and His-266. Lys-274, Asn-283, and Arg-292 together coordinate substrate.

The protein belongs to the PdxA family. Homodimer. Requires Zn(2+) as cofactor. Mg(2+) is required as a cofactor. Co(2+) serves as cofactor.

The protein localises to the cytoplasm. The enzyme catalyses 4-(phosphooxy)-L-threonine + NAD(+) = 3-amino-2-oxopropyl phosphate + CO2 + NADH. The protein operates within cofactor biosynthesis; pyridoxine 5'-phosphate biosynthesis; pyridoxine 5'-phosphate from D-erythrose 4-phosphate: step 4/5. Catalyzes the NAD(P)-dependent oxidation of 4-(phosphooxy)-L-threonine (HTP) into 2-amino-3-oxo-4-(phosphooxy)butyric acid which spontaneously decarboxylates to form 3-amino-2-oxopropyl phosphate (AHAP). In Vibrio cholerae serotype O1 (strain ATCC 39315 / El Tor Inaba N16961), this protein is 4-hydroxythreonine-4-phosphate dehydrogenase.